We begin with the raw amino-acid sequence, 118 residues long: Non-specific lipid-transfer protein 2A (118 aa).

A signal peptide spans 1-26; sequence MARAQLVLVALVAAALLLAGPHTTMA. 4 cysteine pairs are disulfide-bonded: C30–C77, C40–C54, C55–C100, and C75–C114.

This sequence belongs to the plant LTP family.

Its function is as follows. Plant non-specific lipid-transfer proteins transfer phospholipids as well as galactolipids across membranes. May play a role in wax or cutin deposition in the cell walls of expanding epidermal cells and certain secretory tissues. In Oryza sativa subsp. japonica (Rice), this protein is Non-specific lipid-transfer protein 2A (LTP2-A).